Here is a 122-residue protein sequence, read N- to C-terminus: UPF0382 membrane protein SE_0353 (122 aa).

Helical transmembrane passes span 3 to 23, 46 to 66, 69 to 89, and 98 to 118; these read VFII…AFGA, MYHG…SINV, AGWL…FLAL, and ITPI…IATL.

Belongs to the UPF0382 family.

The protein localises to the cell membrane. This Staphylococcus epidermidis (strain ATCC 12228 / FDA PCI 1200) protein is UPF0382 membrane protein SE_0353.